The following is a 1252-amino-acid chain: Guanine nucleotide exchange factor SDC25 (1252 aa).

Positions 26-97 (QPIDVVECTY…PPSFTRSILN (72 aa)) constitute an SH3 domain. Disordered stretches follow at residues 409–454 (IPAS…DTIW) and 623–648 (LNLDNAKDKKNGSQNTDIQEEEDEYE). A compositionally biased stretch (low complexity) spans 416-428 (TSCSSETSHHSPS). The N-terminal Ras-GEF domain occupies 782–914 (SNNRIKGGSK…LLKEVNQKFK (133 aa)). In terms of domain architecture, Ras-GEF spans 952–1199 (DPVLFATQLT…YQLSLIIEPK (248 aa)). Positions 1201 to 1252 (RKKVVPNSNSNNKSQEKSRDDQTDEGKTSTKKDRFSKFQLHKTKKKAPKVSK) are disordered. The segment covering 1214–1236 (SQEKSRDDQTDEGKTSTKKDRFS) has biased composition (basic and acidic residues). Positions 1239-1252 (QLHKTKKKAPKVSK) are enriched in basic residues.

Functionally, promotes the exchange of Ras-bound GDP by GTP. This Saccharomyces cerevisiae (strain YJM789) (Baker's yeast) protein is Guanine nucleotide exchange factor SDC25 (SDC25).